The sequence spans 325 residues: Bifunctional ligase/repressor BirA (325 aa).

Positions Gly23 to Glu42 form a DNA-binding region, H-T-H motif. The BPL/LPL catalytic domain occupies Arg74 to Met262. Residues Gln118, Arg122–Arg124, and Lys189 contribute to the biotin site.

The protein belongs to the biotin--protein ligase family.

It catalyses the reaction biotin + L-lysyl-[protein] + ATP = N(6)-biotinyl-L-lysyl-[protein] + AMP + diphosphate + H(+). Acts both as a biotin--[acetyl-CoA-carboxylase] ligase and a repressor. This chain is Bifunctional ligase/repressor BirA, found in Bacillus subtilis (strain 168).